Here is a 284-residue protein sequence, read N- to C-terminus: Nucleotide-binding protein Sputw3181_3461 (284 aa).

An ATP-binding site is contributed by 8–15 (GRSGSGKS). GTP is bound at residue 56 to 59 (DVRN).

It belongs to the RapZ-like family.

Functionally, displays ATPase and GTPase activities. The chain is Nucleotide-binding protein Sputw3181_3461 from Shewanella sp. (strain W3-18-1).